The sequence spans 328 residues: Olfactory receptor 13A1 (328 aa).

Residues 1–43 (MKLWMESHLIVPETRPSPRMMSNQTLVTEFILQGFSEHPEYRV) are Extracellular-facing. Asparagine 23 carries an N-linked (GlcNAc...) asparagine glycan. A helical membrane pass occupies residues 44 to 64 (FLFSCFLFLYSGALTGNVLIT). The Cytoplasmic segment spans residues 65–72 (LAITFNPG). The helical transmembrane segment at 73–93 (LHAPMYFFLLNLATMDIICTS) threads the bilayer. Over 94 to 117 (SIMPKALASLVSEESSISYGGCMA) the chain is Extracellular. A disulfide bridge links cysteine 115 with cysteine 207. Residues 118–138 (QLYFLTWAASSELLLLTVMAY) form a helical membrane-spanning segment. The Cytoplasmic segment spans residues 139 to 157 (DRYAAICHPLHYSSMMSKV). Residues 158 to 178 (FCSGLATAVWLLCAVNTAIHT) form a helical membrane-spanning segment. The Extracellular portion of the chain corresponds to 179–215 (GLMLRLDFCGPNVIIHFFCEVPPLLLLSCSSTYVNGV). Residues 216-235 (MIVLADAFYGIVNFLMTIAS) form a helical membrane-spanning segment. Residues 236-255 (YGFIVSSILKVKTAWGRQKA) lie on the Cytoplasmic side of the membrane. The helical transmembrane segment at 256 to 276 (FSTCSSHLTVVCMYYTAVFYA) threads the bilayer. The Extracellular portion of the chain corresponds to 277 to 289 (YISPVSGYSAGKS). The helical transmembrane segment at 290–310 (KLAGLLYTVLSPTLNPLIYTL) threads the bilayer. Topologically, residues 311 to 328 (RNKEVKAALRKLFPFFRN) are cytoplasmic.

Belongs to the G-protein coupled receptor 1 family.

The protein resides in the cell membrane. In terms of biological role, odorant receptor. The chain is Olfactory receptor 13A1 (OR13A1) from Homo sapiens (Human).